The sequence spans 222 residues: Cytochrome b6 (222 aa).

Residues 39–59 traverse the membrane as a helical segment; sequence IFYCLGGLTLTCFLIQFATGF. Tyrosine 41 lines the heme b pocket. Cysteine 42 provides a ligand contact to heme c. Heme b is bound by residues arginine 90, histidine 93, arginine 94, histidine 107, and arginine 110. 3 helical membrane-spanning segments follow: residues 97-117, 123-143, and 193-213; these read ASMMVLMMILHVFRVYLTGGF, LTWVVGVMLAVTTVTFGVTGY, and LHTFVLPWAIAVLLLLHFLMI. Residues histidine 194 and histidine 209 each contribute to the heme b site. Arginine 214 and isoleucine 218 together coordinate heme c. Serine 219 contributes to the heme b binding site.

This sequence belongs to the cytochrome b family. PetB subfamily. The 4 large subunits of the cytochrome b6-f complex are cytochrome b6, subunit IV (17 kDa polypeptide, PetD), cytochrome f and the Rieske protein, while the 4 small subunits are PetG, PetL, PetM and PetN. The complex functions as a dimer. Heme b serves as cofactor. The cofactor is heme c.

The protein resides in the cellular thylakoid membrane. Component of the cytochrome b6-f complex, which mediates electron transfer between photosystem II (PSII) and photosystem I (PSI), cyclic electron flow around PSI, and state transitions. This is Cytochrome b6 from Synechocystis sp. (strain ATCC 27184 / PCC 6803 / Kazusa).